Consider the following 212-residue polypeptide: Phosphatidylserine decarboxylase proenzyme (212 aa).

Ser-182 functions as the Schiff-base intermediate with substrate; via pyruvic acid in the catalytic mechanism. Ser-182 is modified (pyruvic acid (Ser); by autocatalysis).

The protein belongs to the phosphatidylserine decarboxylase family. PSD-A subfamily. As to quaternary structure, heterodimer of a large membrane-associated beta subunit and a small pyruvoyl-containing alpha subunit. The cofactor is pyruvate. Post-translationally, is synthesized initially as an inactive proenzyme. Formation of the active enzyme involves a self-maturation process in which the active site pyruvoyl group is generated from an internal serine residue via an autocatalytic post-translational modification. Two non-identical subunits are generated from the proenzyme in this reaction, and the pyruvate is formed at the N-terminus of the alpha chain, which is derived from the carboxyl end of the proenzyme. The post-translation cleavage follows an unusual pathway, termed non-hydrolytic serinolysis, in which the side chain hydroxyl group of the serine supplies its oxygen atom to form the C-terminus of the beta chain, while the remainder of the serine residue undergoes an oxidative deamination to produce ammonia and the pyruvoyl prosthetic group on the alpha chain.

It is found in the cell membrane. It carries out the reaction a 1,2-diacyl-sn-glycero-3-phospho-L-serine + H(+) = a 1,2-diacyl-sn-glycero-3-phosphoethanolamine + CO2. It participates in phospholipid metabolism; phosphatidylethanolamine biosynthesis; phosphatidylethanolamine from CDP-diacylglycerol: step 2/2. In terms of biological role, catalyzes the formation of phosphatidylethanolamine (PtdEtn) from phosphatidylserine (PtdSer). This chain is Phosphatidylserine decarboxylase proenzyme, found in Chlorobium luteolum (strain DSM 273 / BCRC 81028 / 2530) (Pelodictyon luteolum).